Here is a 483-residue protein sequence, read N- to C-terminus: Endoplasmic reticulum lectin 1 (483 aa).

Residues 1 to 33 (MEEGDGGLRSLVPGGPLLLVLYGLLEASGGGRA) form the signal peptide. 2 MRH domains span residues 111–246 (SSCS…LCSH) and 342–469 (SYCF…ICKI). A disulfide bond links C113 and C126. N-linked (GlcNAc...) asparagine glycosylation is present at N195. 5 cysteine pairs are disulfide-bonded: C199-C232, C215-C244, C344-C357, C421-C455, and C436-C467.

As to quaternary structure, may form a complex with OS9, HSPA5, SYVN1, and SEL1L with which it interacts directly. Interacts (via PRKCSH 2 domain) with KREMEN2 (when glycosylated). Interacts with HSPA5. N-glycosylated.

It localises to the endoplasmic reticulum lumen. Functionally, probable lectin that binds selectively to improperly folded lumenal proteins. May function in endoplasmic reticulum quality control and endoplasmic reticulum-associated degradation (ERAD) of both non-glycosylated proteins and glycoproteins. This Mus musculus (Mouse) protein is Endoplasmic reticulum lectin 1 (Erlec1).